The following is a 306-amino-acid chain: Probable arylamine N-acetyltransferase 3 (306 aa).

Residue Cys75 is the Acyl-thioester intermediate of the active site. Residues His115 and Asp130 contribute to the active site.

Belongs to the arylamine N-acetyltransferase family.

It catalyses the reaction an arylamine + acetyl-CoA = an N-acetylarylamine + CoA. In Dictyostelium discoideum (Social amoeba), this protein is Probable arylamine N-acetyltransferase 3.